A 166-amino-acid polypeptide reads, in one-letter code: Small ribosomal subunit protein uS5 (166 aa).

The S5 DRBM domain occupies 12-75 (YIEKLVQVNR…EAARRNMIQV (64 aa)).

This sequence belongs to the universal ribosomal protein uS5 family. As to quaternary structure, part of the 30S ribosomal subunit. Contacts proteins S4 and S8.

In terms of biological role, with S4 and S12 plays an important role in translational accuracy. Located at the back of the 30S subunit body where it stabilizes the conformation of the head with respect to the body. The chain is Small ribosomal subunit protein uS5 from Pseudomonas savastanoi pv. phaseolicola (strain 1448A / Race 6) (Pseudomonas syringae pv. phaseolicola (strain 1448A / Race 6)).